Reading from the N-terminus, the 446-residue chain is Exodeoxyribonuclease 7 large subunit (446 aa).

It belongs to the XseA family. Heterooligomer composed of large and small subunits.

The protein localises to the cytoplasm. It catalyses the reaction Exonucleolytic cleavage in either 5'- to 3'- or 3'- to 5'-direction to yield nucleoside 5'-phosphates.. In terms of biological role, bidirectionally degrades single-stranded DNA into large acid-insoluble oligonucleotides, which are then degraded further into small acid-soluble oligonucleotides. The protein is Exodeoxyribonuclease 7 large subunit of Xanthomonas campestris pv. campestris (strain 8004).